We begin with the raw amino-acid sequence, 103 residues long: Pro-corazonin (103 aa).

The signal sequence occupies residues 1–19 (MSANVTLLLIFVTLASVTA). The residue at position 20 (Q20) is a Pyrrolidone carboxylic acid. At N30 the chain carries Asparagine amide. A propeptide spanning residues 34 to 103 (DQGHLRPELK…NLNAMMDAFY (70 aa)) is cleaved from the precursor.

Expressed in corpora cardiaca (CC), corpora allata (CA), antennal lobe (AL) and gnathal ganglion (GNG) (at protein level). Expression in CC and CA detected in all animals, expression in AL and in GNG in some animals.

It localises to the secreted. Cardioactive peptide. Corazonin is probably involved in the physiological regulation of the heart beat. This Agrotis ipsilon (Black cutworm moth) protein is Pro-corazonin.